The primary structure comprises 2171 residues: Voltage-dependent L-type calcium channel subunit alpha-1C (2171 aa).

Topologically, residues 1–154 (MLRALVQPAT…RACISIVEWK (154 aa)) are cytoplasmic. Residues 77–98 (GAALSWQAAIDAARQAKLMGSA) form a calmodulin-binding region. A disordered region spans residues 103–128 (ISTVSSTQRKRQQYGKPKKQGSTTAT). The span at 110–121 (QRKRQQYGKPKK) shows a compositional bias: basic residues. The I repeat unit spans residues 141 to 438 (NPIRRACISI…LVLGVLSGEF (298 aa)). Residues 155–173 (PFEIIILLTIFANCVALAI) form a helical membrane-spanning segment. Residues 174–188 (YIPFPEDDSNATNSN) are Extracellular-facing. An N-linked (GlcNAc...) asparagine glycan is attached at Asn183. A helical transmembrane segment spans residues 189–209 (LERVEYLFLIIFTVEAFLKVI). Topologically, residues 210-218 (AYGLLFHPN) are cytoplasmic. Residues 219-239 (AYLRNGWNLLDFIIVVVGLFS) form a helical membrane-spanning segment. At 240–262 (AILEQATKADGANALGGKGAGFD) the chain is on the extracellular side. The helical transmembrane segment at 263–281 (VKALRAFRVLRPLRLVSGV) threads the bilayer. Topologically, residues 282–298 (PSLQVVLNSIIKAMVPL) are cytoplasmic. The helical transmembrane segment at 299–320 (LHIALLVLFVIIIYAIIGLELF) threads the bilayer. Topologically, residues 321-380 (MGKMHKTCYNQEGVADVPAEDDPSPCALETGHGRQCQNGTVCKPGWDGPKHGITNFDNFA) are extracellular. 2 disulfide bridges follow: Cys328–Cys356 and Cys346–Cys362. Residue Asn358 is glycosylated (N-linked (GlcNAc...) asparagine). An intramembrane region (pore-forming) is located at residues 381-402 (FAMLTVFQCITMEGWTDVLYWM). A Selectivity filter of repeat I motif is present at residues 391–394 (TMEG). Glu393 contacts Ca(2+). At 403 to 410 (QDAMGYEL) the chain is on the extracellular side. Residues 411–431 (PWVYFVSLVIFGSFFVLNLVL) traverse the membrane as a helical segment. Residues 432–554 (GVLSGEFSKE…RKCRAAVKSN (123 aa)) are Cytoplasmic-facing. The segment at 458 to 475 (QQLEEDLKGYLDWITQAE) is AID/alpha-interaction domain; mediates interaction with the beta subunit. Residues 479–511 (PENEDEGMDEEKPRNMSMPTSETESVNTENVAG) form a disordered region. Residues 495–508 (SMPTSETESVNTEN) show a composition bias toward polar residues. Ser499 bears the Phosphoserine mark. Thr506 is modified (phosphothreonine). One copy of the II repeat lies at 540-786 (NRFCRRKCRA…VFLAIAVDNL (247 aa)). A helical membrane pass occupies residues 555–573 (VFYWLVIFLVFLNTLTIAS). Topologically, residues 574-584 (EHYNQPHWLTE) are extracellular. The helical transmembrane segment at 585–605 (VQDTANKALLALFTAEMLLKM) threads the bilayer. Over 606 to 616 (YSLGLQAYFVS) the chain is Cytoplasmic. A helical transmembrane segment spans residues 617-636 (LFNRFDCFIVCGGILETILV). The Extracellular portion of the chain corresponds to 637–645 (ETKVMSPLG). Residues 646-664 (ISVLRCVRLLRIFKITRYW) traverse the membrane as a helical segment. The Cytoplasmic portion of the chain corresponds to 665 to 683 (NSLSNLVASLLNSVRSIAS). A helical transmembrane segment spans residues 684-703 (LLLLLFLFIIIFSLLGMQLF). The Extracellular segment spans residues 704–723 (GGKFNFDEMQTRRSTFDNFP). The pore-forming intramembrane region spans 724–745 (QSLLTVFQILTGEDWNSVMYDG). Positions 734-737 (TGED) match the Selectivity filter of repeat II motif. Glu736 lines the Ca(2+) pocket. Over 746 to 755 (IMAYGGPSFP) the chain is Extracellular. Residues 756–775 (GMLVCIYFIILFICGNYILL) form a helical membrane-spanning segment. Topologically, residues 776 to 930 (NVFLAIAVDN…LQCHRIVNDT (155 aa)) are cytoplasmic. The segment at 794–891 (SAQKEEEEEK…EMPVGPRPRP (98 aa)) is disordered. Over residues 813-836 (SPEKKQEVVGKPALEEAKEEKIEL) the composition is skewed to basic and acidic residues. A phosphoserine mark is found at Ser838 and Ser845. The interval 859–906 (NESEDKSPYPNPETTGEEDEEEPEMPVGPRPRPLSELHLKEKAVPMPE) is interaction with STAC2. Positions 873–882 (TGEEDEEEPE) are enriched in acidic residues. One copy of the III repeat lies at 917-1199 (NRFRLQCHRI…IFVGFVIVTF (283 aa)). Residues 931 to 949 (IFTNLILFFILLSSISLAA) form a helical membrane-spanning segment. Residues 950–961 (EDPVQHTSFRNH) lie on the Extracellular side of the membrane. The chain crosses the membrane as a helical span at residues 962 to 981 (ILFYFDIVFTTIFTIEIALK). Residues 982–997 (MTAYGAFLHKGSFCRN) lie on the Cytoplasmic side of the membrane. Residues 998 to 1016 (YFNILDLLVVSVSLISFGI) traverse the membrane as a helical segment. Residues 1017–1023 (QSSAINV) are Extracellular-facing. Residues 1024-1042 (VKILRVLRVLRPLRAINRA) form a helical membrane-spanning segment. Residues 1043-1061 (KGLKHVVQCVFVAIRTIGN) lie on the Cytoplasmic side of the membrane. The helical transmembrane segment at 1062 to 1081 (IVIVTTLLQFMFACIGVQLF) threads the bilayer. The Extracellular portion of the chain corresponds to 1082–1131 (KGKLYTCSDSSKQTEAECKGNYITYKDGEVDHPIIQPRSWENSKFDFDNV). A disulfide bond links Cys1088 and Cys1099. A dihydropyridine binding region spans residues 1119 to 1208 (RSWENSKFDF…FQEQGEQEYK (90 aa)). An intramembrane region (pore-forming) is located at residues 1132 to 1152 (LAAMMALFTVSTFEGWPELLY). Positions 1143 to 1146 (TFEG) match the Selectivity filter of repeat III motif. Glu1145 is a Ca(2+) binding site. The Extracellular portion of the chain corresponds to 1153 to 1169 (RSIDSHTEDKGPIYNYR). A helical transmembrane segment spans residues 1170-1191 (VEISIFFIIYIIIIAFFMMNIF). Residues 1192–1249 (VGFVIVTFQEQGEQEYKNCELDKNQRQCVEYALKARPLRRYIPKNQHQYKVWYVVNST) lie on the Cytoplasmic side of the membrane. An IV repeat occupies 1236–1509 (NQHQYKVWYV…LFVAVIMDNF (274 aa)). Residues 1250–1271 (YFEYLMFVLILLNTICLAMQHY) form a helical membrane-spanning segment. Topologically, residues 1272 to 1279 (GQSCLFKI) are extracellular. Residues 1280 to 1301 (AMNILNMLFTGLFTVEMILKLI) traverse the membrane as a helical segment. At 1302–1311 (AFKPKGYFSD) the chain is on the cytoplasmic side. A helical membrane pass occupies residues 1312–1331 (PWNVFDFLIVIGSIIDVILS). Residues 1332-1354 (ETNPAEHTQCSPSMNAEENSRIS) lie on the Extracellular side of the membrane. Residues 1355–1373 (ITFFRLFRVMRLVKLLSRG) traverse the membrane as a helical segment. Topologically, residues 1374 to 1391 (EGIRTLLWTFIKSFQALP) are cytoplasmic. Residues 1392-1412 (YVALLIVMLFFIYAVIGMQVF) form a helical membrane-spanning segment. The Extracellular portion of the chain corresponds to 1413-1434 (GKIALNDTTEINRNNNFQTFPQ). Asn1418 carries N-linked (GlcNAc...) asparagine glycosylation. Residues 1435 to 1453 (AVLLLFRCATGEAWQDIML) constitute an intramembrane region (pore-forming). Positions 1444–1447 (TGEA) match the Selectivity filter of repeat IV motif. Residues 1454 to 1481 (ACMPGKKCAPESEPHNSTEGETPCGSSF) lie on the Extracellular side of the membrane. Residues 1460–1528 (KCAPESEPHN…LGPHHLDEFK (69 aa)) are dihydropyridine binding. A disulfide bridge links Cys1461 with Cys1477. Asn1469 carries N-linked (GlcNAc...) asparagine glycosylation. Residues 1474 to 1516 (ETPCGSSFAVFYFISFYMLCAFLIINLFVAVIMDNFDYLTRDW) are phenylalkylamine binding. The chain crosses the membrane as a helical span at residues 1482–1506 (AVFYFISFYMLCAFLIINLFVAVIM). Residues 1507 to 2171 (DNFDYLTRDW…ADRRAGVSSL (665 aa)) are Cytoplasmic-facing. The important for interaction with STAC1, STAC2 and STAC3 stretch occupies residues 1641–1668 (DEVTVGKFYATFLIQEYFRKFKKRKEQG). A calmodulin-binding IQ region region spans residues 1647-1667 (KFYATFLIQEYFRKFKKRKEQ). Residues 1681–1700 (LQAGLRTLHDIGPEIRRAIS) are important for localization in at the junctional membrane. Residues Ser1700 and Ser1721 each carry the phosphoserine modification. Residues 1760–1797 (ISKAGNNQGDTESPSHEKLVDSTFTPSSYSSTGSNANI) form a disordered region. Positions 1781 to 1793 (STFTPSSYSSTGS) are enriched in polar residues. A Phosphoserine; by PKA modification is found at Ser1928. Disordered regions lie at residues 1971-2014 (RSHS…EKLN), 2026-2060 (SGEN…GRQF), and 2114-2155 (SGGA…PGCG). The segment covering 2130–2140 (NRRDPGRDRAG) has biased composition (basic and acidic residues).

This sequence belongs to the calcium channel alpha-1 subunit (TC 1.A.1.11) family. CACNA1C subfamily. Component of a calcium channel complex consisting of a pore-forming alpha subunit (CACNA1C) and ancillary beta, gamma and delta subunits. The channel complex contains alpha, beta, gamma and delta subunits in a 1:1:1:1 ratio, i.e. it contains only one of each type of subunit. CACNA1C channel activity is modulated by ancillary subunits, such as CACNB1, CACNB2, CACNB3, CACNA2D1 and CACNA2D4. Interacts with CACNB1. Interacts with CACNB2. Identified in a complex with CACNA2D4 and CACNB3. Interacts with CACNB3. Interacts with CACNA2D1. Interacts with the gamma subunits CACNG4, CACNG6, CACNG7 and CACNG8. Interacts with CACNA2D4. Interacts with CALM1. Interacts (via the N-terminus and the C-terminal C and IQ motifs) with CABP1; this inhibits Ca(2+)-dependent channel inactivation. The binding via the C motif is calcium independent whereas the binding via IQ requires the presence of calcium and is mutually exclusive with calmodulin binding. The binding to the cytoplasmic N-terminal domain is calcium independent but is essential for the channel modulation. Interacts (via C-terminal CDB motif) with CABP5; in a calcium-dependent manner. Interacts with CIB1; the interaction increases upon cardiomyocytes hypertrophy. Interacts with STAC1, STAC2 and STAC3; this inhibits channel inactivation, probably by hindering CALM1 binding. In terms of processing, phosphorylation by PKA at Ser-1928 activates the channel. Elevated levels of blood glucose lead to increased phosphorylation by PKA. Expression in cardiac muscle. In lung, expressed in airway and vascular smooth muscle cells.

The protein localises to the cell membrane. The protein resides in the sarcolemma. It localises to the perikaryon. Its subcellular location is the postsynaptic density membrane. It is found in the cell projection. The protein localises to the dendrite. The protein resides in the T-tubule. It carries out the reaction Ca(2+)(in) = Ca(2+)(out). Its activity is regulated as follows. Inhibited by dihydropyridines (DHP), such as isradipine. Inhibited by nifedipine. Channel activity is regulated by Ca(2+) and calmodulin. Binding of STAC1, STAC2 or STAC3 to a region that overlaps with the calmodulin binding site inhibits channel inactivation by Ca(2+) and calmodulin. Binding of calmodulin or CABP1 at the same regulatory sites results in opposite effects on the channel function. Shear stress and pressure increases calcium channel activity. Pore-forming, alpha-1C subunit of the voltage-gated calcium channel that gives rise to L-type calcium currents. Mediates influx of calcium ions into the cytoplasm, and thereby triggers calcium release from the sarcoplasm. Plays an important role in excitation-contraction coupling in the heart. Required for normal heart development and normal regulation of heart rhythm. Required for normal contraction of smooth muscle cells in blood vessels and in the intestine. Essential for normal blood pressure regulation via its role in the contraction of arterial smooth muscle cells. Long-lasting (L-type) calcium channels belong to the 'high-voltage activated' (HVA) group. This chain is Voltage-dependent L-type calcium channel subunit alpha-1C (CACNA1C), found in Oryctolagus cuniculus (Rabbit).